Consider the following 198-residue polypeptide: Nuclear transcription factor Y subunit A-4 (198 aa).

Positions 1 to 47 are disordered; it reads MTSSVHELSDNNESHAKKERPDSQTRPQVPSGRSSESIDTNSVYSEP. Positions 7–23 are enriched in basic and acidic residues; it reads ELSDNNESHAKKERPDS. Positions 24–44 are enriched in polar residues; sequence QTRPQVPSGRSSESIDTNSVY. Residues 101–124 carry the Subunit association domain (SAD) motif; the sequence is FVNAKQYHGILRRRQSRAKLEARN. Positions 131 to 156 form a DNA-binding region, NFYA/HAP2-type; the sequence is KPYMHESRHLHAIRRPRGCGGRFLNA. The disordered stretch occupies residues 136 to 198; sequence ESRHLHAIRR…MATSGPNGRS (63 aa). A compositionally biased stretch (basic and acidic residues) spans 156-166; it reads AKKENGDHKEE.

It belongs to the NFYA/HAP2 subunit family. In terms of assembly, heterotrimeric transcription factor composed of three components, NF-YA, NF-YB and NF-YC. NF-YB and NF-YC must interact and dimerize for NF-YA association and DNA binding. As to expression, expressed in stems, caulines, and senescent flowers.

Its subcellular location is the nucleus. In terms of biological role, stimulates the transcription of various genes by recognizing and binding to a CCAAT motif in promoters. The chain is Nuclear transcription factor Y subunit A-4 (NFYA4) from Arabidopsis thaliana (Mouse-ear cress).